We begin with the raw amino-acid sequence, 1986 residues long: Protein Shroom3 (1986 aa).

A disordered region spans residues 1–21 (MKTPENLEEPSATPNPSRTPT). In terms of domain architecture, PDZ spans 24-109 (FVYLEALLEG…TLRLVVRRDV (86 aa)). Disordered stretches follow at residues 152-199 (CSEP…SSTS), 211-239 (RSPDQCSSQGSMESLEPSGGYPPCHLLSP), 265-285 (TSSSIFEYPPPGGSARERSGS), 342-463 (QGCA…QPLL), and 564-1055 (NEDS…RRIF). Serine 212 carries the post-translational modification Phosphoserine. 2 stretches are compositionally biased toward polar residues: residues 357 to 376 (PSPSWSQQCSGSLETATDNL) and 415 to 425 (PQTNSSGSQKT). Residues 430-440 (DQLHTVPERSP) show a composition bias toward basic and acidic residues. Serine 439 and serine 443 each carry phosphoserine. A compositionally biased stretch (polar residues) spans 595-607 (ACSNHHSLSSPQA). Positions 630-645 (QEDHNANLRQKVEREG) are enriched in basic and acidic residues. Positions 653–677 (NSGRTRSAFSSLQNIPESLRRQSNV) are enriched in polar residues. Over residues 747–761 (SGASQRRLSSSSSAA) the composition is skewed to low complexity. Residues 774-785 (KVSRIEEREQGR) show a composition bias toward basic and acidic residues. 2 stretches are compositionally biased toward low complexity: residues 796–814 (YGPGYRPGRTGPTPSTSSS) and 865–874 (DGRGPPARGG). Serine 888 is subject to Phosphoserine. The segment covering 895–908 (EAEREASWSEDRPG) has biased composition (basic and acidic residues). Threonine 909 carries the phosphothreonine modification. Phosphoserine occurs at positions 912 and 969. Positions 927–1023 (IKDAQSRVLG…SEPEKMNEVG (97 aa)) constitute an ASD1 domain. The segment covering 1004 to 1020 (LTVEQKKRSYSEPEKMN) has biased composition (basic and acidic residues). A phosphoserine mark is found at serine 1063 and serine 1066. Disordered regions lie at residues 1083 to 1102 (YIQRKTGKRPTGAACTPEAG), 1107 to 1223 (AQSA…AEDL), 1304 to 1425 (ATVA…PPWV), and 1446 to 1654 (ANLK…KTSE). Residues 1114–1127 (AGPAAPDGPGLASA) are compositionally biased toward low complexity. Positions 1134–1146 (REPEALPRKEHTH) are enriched in basic and acidic residues. Tryptophan 1175, valine 1179, and serine 1219 each carry phosphoserine. Residues 1307–1318 (ASSAPPESSGAA) show a composition bias toward low complexity. Residues serine 1350 and serine 1354 each carry the phosphoserine modification. The span at 1366-1399 (YRSQLAMDQQTGQQPPSSPASAVTQPTSPRSPEL) shows a compositional bias: polar residues. Over residues 1455 to 1469 (PSRPSSCSTSDPDTP) the composition is skewed to low complexity. The span at 1513-1524 (LPPPPPPSPPSE) shows a compositional bias: pro residues. The span at 1581–1630 (EGSQIMTATPPQTSAKGSEAESNTPSSASAQPQLNGSPGKQLCPSQTRNL) shows a compositional bias: polar residues. A compositionally biased stretch (basic and acidic residues) spans 1634-1654 (PVERTQDLGKKTHAEPQKTSE). In terms of domain architecture, ASD2 spans 1659-1947 (EALAKEIVHQ…QVRCLLESLP (289 aa)). A coiled-coil region spans residues 1844–1890 (RLARVENVLRGLGEDASKEERSSLNEKRKVLAGQHEDARELKENLDR).

The protein belongs to the shroom family. In terms of assembly, interacts with F-actin. Interacts with ROCK1.

Its subcellular location is the cell junction. It is found in the adherens junction. It localises to the cytoplasm. The protein localises to the cytoskeleton. The protein resides in the apical cell membrane. Its function is as follows. Controls cell shape changes in the neuroepithelium during neural tube closure. Induces apical constriction in epithelial cells by promoting the apical accumulation of F-actin and myosin II, and probably by bundling stress fibers. Induces apicobasal cell elongation by redistributing gamma-tubulin and directing the assembly of robust apicobasal microtubule arrays. The sequence is that of Protein Shroom3 (Shroom3) from Mus musculus (Mouse).